The chain runs to 713 residues: UvrABC system protein B (713 aa).

One can recognise a Helicase ATP-binding domain in the interval 35 to 421; that stretch reads RRIRAGEKDV…GDGFVEQIIR (387 aa). 48–55 contributes to the ATP binding site; that stretch reads GATGTGKS. Positions 101-124 match the Beta-hairpin motif; it reads YYDYYQPEAYVPQSDTYIEKDSSI. One can recognise a Helicase C-terminal domain in the interval 438–604; the sequence is QIDDLVHEIR…PLRKKINDIV (167 aa). Residues 624 to 663 form a disordered region; sequence QAKDGKGAKAPVPSLGGKAAAKGAKSAKGKAKETVPTDRP. Residues 639–649 are compositionally biased toward low complexity; it reads GGKAAAKGAKS. The segment covering 653–663 has biased composition (basic and acidic residues); that stretch reads KAKETVPTDRP. Positions 668-703 constitute a UVR domain; it reads AEEIEELTNRMRAAAADLQFEIAARLRDEVSEMKKE.

It belongs to the UvrB family. As to quaternary structure, forms a heterotetramer with UvrA during the search for lesions. Interacts with UvrC in an incision complex.

The protein localises to the cytoplasm. The UvrABC repair system catalyzes the recognition and processing of DNA lesions. A damage recognition complex composed of 2 UvrA and 2 UvrB subunits scans DNA for abnormalities. Upon binding of the UvrA(2)B(2) complex to a putative damaged site, the DNA wraps around one UvrB monomer. DNA wrap is dependent on ATP binding by UvrB and probably causes local melting of the DNA helix, facilitating insertion of UvrB beta-hairpin between the DNA strands. Then UvrB probes one DNA strand for the presence of a lesion. If a lesion is found the UvrA subunits dissociate and the UvrB-DNA preincision complex is formed. This complex is subsequently bound by UvrC and the second UvrB is released. If no lesion is found, the DNA wraps around the other UvrB subunit that will check the other stand for damage. This chain is UvrABC system protein B, found in Streptomyces avermitilis (strain ATCC 31267 / DSM 46492 / JCM 5070 / NBRC 14893 / NCIMB 12804 / NRRL 8165 / MA-4680).